Here is a 58-residue protein sequence, read N- to C-terminus: Large ribosomal subunit protein uL30 (58 aa).

This sequence belongs to the universal ribosomal protein uL30 family. In terms of assembly, part of the 50S ribosomal subunit.

This Vibrio vulnificus (strain CMCP6) protein is Large ribosomal subunit protein uL30.